Here is a 213-residue protein sequence, read N- to C-terminus: HTH-type transcriptional regulator SrpR (213 aa).

The region spanning 10–70 (EETRQRIIDA…AVLASRQHPL (61 aa)) is the HTH tetR-type domain. The H-T-H motif DNA-binding region spans 33-52 (TLDQIARKAGVTRGAVYWHF).

In terms of biological role, in conjunction with SrpS represses the srpABC operon. This chain is HTH-type transcriptional regulator SrpR (srpR), found in Pseudomonas putida (Arthrobacter siderocapsulatus).